A 129-amino-acid chain; its full sequence is Transcription antitermination protein NusB (129 aa).

The protein belongs to the NusB family.

Functionally, involved in transcription antitermination. Required for transcription of ribosomal RNA (rRNA) genes. Binds specifically to the boxA antiterminator sequence of the ribosomal RNA (rrn) operons. In Staphylococcus aureus (strain N315), this protein is Transcription antitermination protein NusB.